A 355-amino-acid chain; its full sequence is S-adenosylmethionine:tRNA ribosyltransferase-isomerase (355 aa).

This sequence belongs to the QueA family. As to quaternary structure, monomer.

The protein resides in the cytoplasm. The catalysed reaction is 7-aminomethyl-7-carbaguanosine(34) in tRNA + S-adenosyl-L-methionine = epoxyqueuosine(34) in tRNA + adenine + L-methionine + 2 H(+). Its pathway is tRNA modification; tRNA-queuosine biosynthesis. In terms of biological role, transfers and isomerizes the ribose moiety from AdoMet to the 7-aminomethyl group of 7-deazaguanine (preQ1-tRNA) to give epoxyqueuosine (oQ-tRNA). The chain is S-adenosylmethionine:tRNA ribosyltransferase-isomerase from Aeromonas hydrophila subsp. hydrophila (strain ATCC 7966 / DSM 30187 / BCRC 13018 / CCUG 14551 / JCM 1027 / KCTC 2358 / NCIMB 9240 / NCTC 8049).